The sequence spans 252 residues: UPF0246 protein FP0718 (252 aa).

This sequence belongs to the UPF0246 family.

The protein is UPF0246 protein FP0718 of Flavobacterium psychrophilum (strain ATCC 49511 / DSM 21280 / CIP 103535 / JIP02/86).